The chain runs to 98 residues: Large ribosomal subunit protein bL28 (98 aa).

The protein belongs to the bacterial ribosomal protein bL28 family.

This is Large ribosomal subunit protein bL28 from Phenylobacterium zucineum (strain HLK1).